The sequence spans 245 residues: 23S rRNA (guanosine-2'-O-)-methyltransferase RlmB (245 aa).

The S-adenosyl-L-methionine site is built by glycine 197, isoleucine 217, and leucine 226.

Belongs to the class IV-like SAM-binding methyltransferase superfamily. RNA methyltransferase TrmH family. RlmB subfamily.

The protein localises to the cytoplasm. The catalysed reaction is guanosine(2251) in 23S rRNA + S-adenosyl-L-methionine = 2'-O-methylguanosine(2251) in 23S rRNA + S-adenosyl-L-homocysteine + H(+). Functionally, specifically methylates the ribose of guanosine 2251 in 23S rRNA. The sequence is that of 23S rRNA (guanosine-2'-O-)-methyltransferase RlmB from Photobacterium profundum (strain SS9).